The following is a 756-amino-acid chain: Rab11 family-interacting protein 3 (756 aa).

Pro residues predominate over residues Met-1–Pro-24. The interval Met-1–Gly-204 is disordered. Positions Ala-2–Tyr-435 are important for binding to DYNC1LI1. The segment covering Pro-27–Leu-39 has biased composition (low complexity). Position 52 is a phosphoserine (Ser-52). Low complexity predominate over residues Pro-53–Ala-68. A compositionally biased stretch (pro residues) spans Asp-84–Ser-94. Ser-102 is subject to Phosphoserine; by CDK1. EF-hand domains follow at residues Glu-202–Glu-237 and Tyr-234–Gly-269. 7 residues coordinate Ca(2+): Asp-215, Asp-217, Asp-219, Asp-226, Asp-247, Ser-249, and Asp-258. A phosphoserine mark is found at Ser-281, Ser-348, Ser-488, Ser-538, Ser-647, and Ser-648. An ARF-binding domain (ABD) region spans residues Gly-484–Leu-588. The stretch at Glu-485–Gln-694 forms a coiled coil. A disordered region spans residues Arg-645–Glu-664. Basic and acidic residues predominate over residues Tyr-654–Glu-664. An FIP-RBD domain is found at Gln-694–Lys-756.

In terms of assembly, homodimer. Interacts with RAB11A; the interaction is direct and is required for the recruitment to endosomes. Interacts with RAB11B. Forms a ternary complex with RAB11A and dynein intermediate chain DYNC1LI1; RAB11FIP3 links RAB11A to dynein and the interaction regulates endocytic trafficking. Interacts with dynein intermediate chain and dynactin (DCTN1); the interaction activates dynein processivity. Interacts with ARF6 and EXOC7; the interaction serves for recruitment and tethering of recycling endosomes-derived vesicles to the cleavage furrow/midbody. Interacts with RACGAP1/MgcRacGAP; the interaction occurs at late telophase and is required for recruitment and tethering of recycling endosomes-derived vesicles to the cleavage furrow/midbody. Forms a complex with RAB11A and Rabin8/RAB3IP, probably a heterohexamer with two of each protein subunit, where RAB3IP and RAB11FIP3 simultaneously bind to RAB11A; the complex promotes preciliary trafficking. Forms a complex containing RAB11A, ASAP1, RAB3IP, RAP11FIP3 and ARF4; the complex promotes preciliary trafficking; the complex binds to RHO in photoreceptor cells and promotes RHO ciliary transport. Interacts with RAB11FIP4. Interacts with RAB25. Phosphorylated at Ser-102 by CDK1 during metaphase, and dephosphorylated as cells enter telophase.

The protein resides in the endosome membrane. It localises to the recycling endosome membrane. It is found in the cytoplasm. Its subcellular location is the cytoskeleton. The protein localises to the microtubule organizing center. The protein resides in the centrosome. It localises to the cleavage furrow. It is found in the midbody. Its subcellular location is the golgi apparatus membrane. The protein localises to the golgi apparatus. The protein resides in the trans-Golgi network membrane. In terms of biological role, downstream effector molecule for Rab11 GTPase which is involved in endocytic trafficking, cytokinesis and intracellular ciliogenesis by participating in membrane delivery. Recruited by Rab11 to endosomes where it links Rab11 to dynein motor complex. The functional Rab11-RAB11FIP3-dynein complex regulates the movement of peripheral sorting endosomes (SE) along microtubule tracks toward the microtubule organizing center/centrosome, generating the endocytic recycling compartment (ERC) during interphase of cell cycle. Facilitates the interaction between dynein and dynactin and activates dynein processivity. Binding with ASAP1 is needed to regulate the pericentrosomal localization of recycling endosomes. The Rab11-RAB11FIP3 complex is also implicated in the transport during telophase of vesicles derived from recycling endosomes to the cleavage furrow via centrosome-anchored microtubules, where the vesicles function to deliver membrane during late cytokinesis and abscission. The recruitment of Rab11-RAB11FIP3-containing endosomes to the cleavage furrow and tethering to the midbody is co-mediated by RAB11FIP3 interaction with ARF6-exocyst and RACGAP1-MKLP1 tethering complexes. Also involved in the Rab11-Rabin8-Rab8 ciliogenesis cascade by facilitating the orderly assembly of a ciliary targeting complex containing Rab11, ASAP1, Rabin8/RAB3IP, RAB11FIP3 and ARF4, which directs preciliary vesicle trafficking to mother centriole and ciliogenesis initiation. Also promotes the activity of Rab11 and ASAP1 in the ARF4-dependent Golgi-to-cilia transport of the sensory receptor rhodopsin. Competes with WDR44 for binding to Rab11, which controls intracellular ciliogenesis pathway. May play a role in breast cancer cell motility by regulating actin cytoskeleton. This Homo sapiens (Human) protein is Rab11 family-interacting protein 3.